A 7182-amino-acid polypeptide reads, in one-letter code: Replicase polyprotein 1ab (7182 aa).

The CoV Nsp1 globular domain maps to 25–151; that stretch reads RTDHVSLKAS…EFQFLLRKKG (127 aa). Residues 159–195 enclose the BetaCoV Nsp1 C-terminal domain; the sequence is DAPWDYNWTPYSDLMDALEADPCGKYSQSLLKKLVGG. The CoV Nsp2 N-terminal domain maps to 197–473; the sequence is FTPIDQYMCG…WSKVCETANL (277 aa). Zn(2+) contacts are provided by C340, C343, C359, and C361. A C4 region spans residues 340 to 361; the sequence is CTSCGKGSWLTGNAVQGFACDC. The CoV Nsp2 middle domain occupies 479–713; it reads QHAINFVNEF…MHILSKAMQL (235 aa). The CoV Nsp2 C-terminal domain occupies 715 to 851; that stretch reads HTTVSWAGSK…VPTLFRLKGG (137 aa). Positions 855–964 constitute a Ubiquitin-like 1 domain; the sequence is KGVKFGGEQT…MTFSVNPVEE (110 aa). Macro domains are found at residues 1186–1345 and 1354–1480; these read PLKN…KVYN and TGLT…AVQT. The DPUP domain occupies 1480-1553; it reads TPEQSFINTV…LEKCRTYLTS (74 aa). Positions 1558 to 1613 constitute a Ubiquitin-like 2 domain; the sequence is QKNVDVLVTIDGVNFRTVVLNNTTTYRVQLGSVFYKGSDISDTIPTEKMSGEAVYL. The Peptidase C16 domain maps to 1628–1902; sequence VYGTADTAFL…WADVDPDLSA (275 aa). C1668 acts as the For PL-PRO activity in catalysis. C1748, C1751, C1783, and C1785 together coordinate Zn(2+). The C4-type zinc finger occupies 1748–1785; sequence CNVCGVQDTTTTGLKACIYVGMNSLDELHATHEECCQC. Residues H1838 and D1853 each act as for PL-PRO activity in the active site. Positions 1916–2033 constitute a Nucleic acid-binding domain; that stretch reads VIEYSPATIL…QVYDIAPVTL (118 aa). In terms of domain architecture, G2M spans 2059-2179; that stretch reads PQSPVQVAED…ASVTVNVTTA (121 aa). 3 helical membrane passes run 2158–2178, 2196–2216, and 2268–2288; these read ILLGASSLFAQFASVTVNVTT, GIIGQGFALLKMLLILPFTFW, and LLFLICTTGLLLSSLYYLFLF. Residues 2158–2441 are HD1; that stretch reads ILLGASSLFA…VTHIPLLGLV (284 aa). The 3Ecto domain occupies 2305-2371; the sequence is LATYRELRSY…FQMIQTHVTS (67 aa). 2 disulfide bridges follow: C2321-C2349 and C2339-C2346. The next 3 membrane-spanning stretches (helical) occupy residues 2372–2392, 2396–2416, and 2421–2441; these read YVINIDWVWFVMEFALAYVLY, FNVLLLVVSSQYFFSYTGAFV, and YNYLVSGYFFCVTHIPLLGLV. A Y1 region spans residues 2455–2545; that stretch reads RFYNHVINGC…SLRRLVKPTD (91 aa). A CoV Nsp3 Y domain is found at 2455–2828; the sequence is RFYNHVINGC…LSVKFSATKL (374 aa). Positions 2459, 2464, 2469, 2472, 2505, 2508, 2512, and 2515 each coordinate Zn(2+). The ZF1 stretch occupies residues 2459-2472; sequence HVINGCKDTACLLC. Positions 2505-2515 are ZF2; the sequence is CCRHNWNCVDC. The Y2 stretch occupies residues 2546 to 2644; the sequence is KSHYYVESVT…LVDSNMVTTV (99 aa). The segment at 2546-2828 is coV-Y; it reads KSHYYVESVT…LSVKFSATKL (283 aa). The tract at residues 2645–2727 is Y3; it reads GDSREIASKM…DALQYAYKHD (83 aa). Residues 2728-2828 are Y4; it reads LQLTTEGFNN…LSVKFSATKL (101 aa). The next 4 helical transmembrane spans lie at 2848–2868, 3119–3139, 3152–3172, and 3203–3223; these read CVVTLVVFAMAVLSYLCLPAF, STSLALGVMLCIFLTIAFYYV, CAVVAVAAALLNSLCLCFVVS, and WFVMFGTVVPIWMVFAYIVGV. The segment at 2848–3223 is HD2; it reads CVVTLVVFAM…WMVFAYIVGV (376 aa). Residues 3242–3338 form the Nsp4C domain; it reads VFTDGKLNCS…NCSVTSSVLQ (97 aa). In terms of domain architecture, Peptidase C30 spans 3339–3644; sequence SGLVKMAAPS…NMQVMGVVMQ (306 aa). Active-site for 3CL-PRO activity residues include H3379 and C3486. Transmembrane regions (helical) follow at residues 3650 to 3670, 3684 to 3704, 3709 to 3729, 3760 to 3777, 3782 to 3802, 3823 to 3843, and 3855 to 3875; these read ISYGLVHWLFTTLLLAYVATL, VIPLQLTPLVLCVMACVMLTV, TFLTLFLLPTAICLTYANIVY, LGVYLSLCFALAVVVRRL, ASNLALALGSAMVWFYTYTTG, VTVFLAVNVAKFFARVVFLYA, and LVLLMYLAVGYFCTVYFGVFS. Residues 3650-3875 form an HD3 region; sequence ISYGLVHWLF…FCTVYFGVFS (226 aa). The 83-residue stretch at 3937 to 4019 folds into the RdRp Nsp7 cofactor domain; the sequence is SKLTDLKCTS…DLLDHPSVLQ (83 aa). Positions 4020–4218 constitute a RdRp Nsp8 cofactor domain; sequence ATLSEFSHLA…RAASSAVTLQ (199 aa). The Nsp9 ssRNA-binding domain occupies 4219-4328; the sequence is NNEIRPSGLK…GHIAATVRLQ (110 aa). One can recognise an ExoN/MTase coactivator domain in the interval 4329-4467; it reads AGSNTEFAIN…DALRGTTIPQ (139 aa). 8 residues coordinate Zn(2+): C4402, C4405, H4411, C4418, C4444, C4447, C4455, and C4457. 2 zinc fingers span residues 4402-4418 and 4444-4457; these read CLYCRAHIEHPDVTGVC and CNVCQFWIGHGCNC. The NiRAN domain occupies 4473 to 4730; sequence FLNRVRGSIV…AAETHRDCDL (258 aa). Residues N4678 and D4687 each contribute to the Mn(2+) site. The Nsp12 Interface domain maps to 4735–4833; sequence IEWPLLEYDY…MNMDVSLHRH (99 aa). Zn(2+)-binding residues include H4764, C4770, C4775, C4779, and C4956. The Nsp12 RNA-dependent RNA polymerase domain occupies 4834 to 5401; sequence RLSLKELMMY…DLYTAPTTLQ (568 aa). The interval 4836–5050 is rdRp Fingers N-ter; that stretch reads SLKELMMYAA…HQKMLKSMAA (215 aa). The tract at residues 5051–5089 is rdRp Palm N-ter; that stretch reads TRGSTCVIGTTKFYGGWDFMLKTLYKDVDNPHLMGWDYP. A RdRp catalytic domain is found at 5081–5243; sequence PHLMGWDYPK…CYNSDYATKG (163 aa). Residues 5090 to 5148 are rdRp Fingers C-ter; sequence KCDRAMPNMCRIFASLILARKHSTCCTNTDRFYRLANECAQVLSEYVLCGGGYYVKPGG. 3 residues coordinate Zn(2+): H5111, C5114, and C5115. A rdRp Palm C-ter region spans residues 5149–5284; it reads TSSGDATTAY…KKGPHEFCSQ (136 aa). Residues S5228, D5229, and D5230 contribute to the active site. The interval 5285–5401 is rdRp Thumb; sequence HTLFIKDGDD…DLYTAPTTLQ (117 aa). Positions 5402-5514 constitute a CV ZBD domain; that stretch reads AVGSCVVCHS…TEFNRLATCD (113 aa). C5406, C5409, C5417, C5420, C5427, C5430, H5434, H5440, C5451, C5456, C5473, and H5476 together coordinate Zn(2+). The (+)RNA virus helicase ATP-binding domain maps to 5658-5839; it reads TVPEEFANHV…MCNLGPDIFL (182 aa). Residue 5683 to 5690 coordinates ATP; the sequence is GPPGTGKS. The 175-residue stretch at 5840 to 6014 folds into the (+)RNA virus helicase C-terminal domain; that stretch reads SVCYRCPEEI…GLYKDCSRES (175 aa). One can recognise an ExoN domain in the interval 6071–6286; sequence LFITRDEAIR…RCLAIHDCFI (216 aa). Catalysis depends on residues D6089, E6091, and E6190. Residues C6206, C6209, C6225, H6228, H6256, C6260, and H6263 each contribute to the Zn(2+) site. Residues H6267 and D6272 contribute to the active site. C6278 contacts Zn(2+). Positions 6295-6523 constitute an N7-MTase domain; sequence YPYISHEKRL…NLWSTFTKIQ (229 aa). Residue 6330 to 6336 participates in S-adenosyl-L-methionine binding; sequence DIGNPKG. Residues 6409-6423 are gpppA-binding; it reads CDGGSLYVNKHAFHT. Positions 6447, 6469, 6480, and 6483 each coordinate Zn(2+). The 61-residue stretch at 6524-6584 folds into the Nsp15 N-terminal oligomerization domain; that stretch reads GLENIAYNVI…NIAFELYAKR (61 aa). The region spanning 6585-6715 is the AV-Nsp11N/CoV-Nsp15M domain; that stretch reads AVRSHPDFNL…IYKKVNNEFV (131 aa). The 140-residue stretch at 6732–6871 folds into the NendoU domain; that stretch reads TPVSEMEKDF…KDGQVQTFYP (140 aa). Active-site residues include H6762, H6777, K6817, K6920, D7004, K7044, and E7077. One can recognise a Nidovirus-type SAM-dependent 2'-O-MTase domain in the interval 6876 to 7170; the sequence is INDWKPGLAM…TLSVSTDVLV (295 aa).

It belongs to the coronaviruses polyprotein 1ab family. Interacts with host PHB and PHB2. As to quaternary structure, interacts with papain-like protease nsp3 and non-structural protein 6. In terms of assembly, monomer. Homodimer. Only the homodimer shows catalytic activity. Interacts with nsp8 and nsp12 to form the replication-transcription complex (RTC): nsp12, nsp7, two subunits of nsp8, and up to two subunits of nsp13. As to quaternary structure, interacts with nsp7, nsp13 and nsp12 to form the replication-transcription complex (RTC): nsp12, nsp7, two subunits of nsp8, and up to two subunits of nsp13. In terms of assembly, interacts with nsp12. Interacts with proofreading exoribonuclease nsp14 and 2'-O-methyltransferase nsp16; these interactions enhance nsp14 and nsp16 enzymatic activities. As to quaternary structure, interacts with nsp7 and nsp8 to form the replication-transcription complex (RTC): nsp12, nsp7, two subunits of nsp8, and up to two subunits of nsp13. Interacts with nsp9. In terms of assembly, interacts with nsp8 to form the replication-transcription complex (RTC): nsp12, nsp7, two subunits of nsp8, and up to two subunits of nsp13. Mn(2+) is required as a cofactor. It depends on Mg(2+) as a cofactor. Post-translationally, specific enzymatic cleavages in vivo by its own proteases yield mature proteins. 3CL-PRO and PL-PRO proteinases are autocatalytically processed.

The protein localises to the host membrane. The protein resides in the host cytoplasm. It localises to the host perinuclear region. It is found in the host endoplasmic reticulum-Golgi intermediate compartment. The catalysed reaction is RNA(n) + a ribonucleoside 5'-triphosphate = RNA(n+1) + diphosphate. It carries out the reaction ATP + H2O = ADP + phosphate + H(+). It catalyses the reaction Thiol-dependent hydrolysis of ester, thioester, amide, peptide and isopeptide bonds formed by the C-terminal Gly of ubiquitin (a 76-residue protein attached to proteins as an intracellular targeting signal).. The enzyme catalyses a 5'-end (N(7)-methyl 5'-triphosphoguanosine)-ribonucleoside in mRNA + S-adenosyl-L-methionine = a 5'-end (N(7)-methyl 5'-triphosphoguanosine)-(2'-O-methyl-ribonucleoside) in mRNA + S-adenosyl-L-homocysteine + H(+). The catalysed reaction is uridylyl-uridylyl-ribonucleotide-RNA = a 3'-end uridylyl-2',3'-cyclophospho-uridine-RNA + a 5'-end dephospho-ribonucleoside-RNA. It carries out the reaction a 5'-end diphospho-ribonucleoside in mRNA + GTP + H(+) = a 5'-end (5'-triphosphoguanosine)-ribonucleoside in mRNA + diphosphate. It catalyses the reaction a 5'-end (5'-triphosphoguanosine)-ribonucleoside in mRNA + S-adenosyl-L-methionine = a 5'-end (N(7)-methyl 5'-triphosphoguanosine)-ribonucleoside in mRNA + S-adenosyl-L-homocysteine. Its function is as follows. The replicase polyprotein of coronaviruses is a multifunctional protein: it contains the activities necessary for the transcription of negative stranded RNA, leader RNA, subgenomic mRNAs and progeny virion RNA as well as proteinases responsible for the cleavage of the polyprotein into functional products. Inhibits host translation by interacting with the 40S ribosomal subunit. The nsp1-40S ribosome complex further induces an endonucleolytic cleavage near the 5'UTR of host mRNAs, targeting them for degradation. Viral mRNAs are not susceptible to nsp1-mediated endonucleolytic RNA cleavage thanks to the presence of a 5'-end leader sequence and are therefore protected from degradation. By suppressing host gene expression, nsp1 facilitates efficient viral gene expression in infected cells and evasion from host immune response. In terms of biological role, may play a role in the modulation of host cell survival signaling pathway by interacting with host PHB and PHB2. Indeed, these two proteins play a role in maintaining the functional integrity of the mitochondria and protecting cells from various stresses. Functionally, responsible for the cleavages located at the N-terminus of the replicase polyprotein. In addition, PL-PRO possesses a deubiquitinating/deISGylating activity and processes both 'Lys-48'- and 'Lys-63'-linked polyubiquitin chains from cellular substrates. Participates together with nsp4 in the assembly of virally-induced cytoplasmic double-membrane vesicles necessary for viral replication. Antagonizes innate immune induction of type I interferon by blocking the phosphorylation, dimerization and subsequent nuclear translocation of host IRF3. Also prevents host NF-kappa-B signaling. Its function is as follows. Participates in the assembly of virally-induced cytoplasmic double-membrane vesicles necessary for viral replication. Cleaves the C-terminus of replicase polyprotein at 11 sites. Recognizes substrates containing the core sequence [ILMVF]-Q-|-[SGACN]. Also able to bind an ADP-ribose-1''-phosphate (ADRP). In terms of biological role, plays a role in the initial induction of autophagosomes from host endoplasmic reticulum. Later, limits the expansion of these phagosomes that are no longer able to deliver viral components to lysosomes. Functionally, forms a hexadecamer with nsp8 (8 subunits of each) that may participate in viral replication by acting as a primase. Alternatively, may synthesize substantially longer products than oligonucleotide primers. Its function is as follows. Forms a hexadecamer with nsp7 (8 subunits of each) that may participate in viral replication by acting as a primase. Alternatively, may synthesize substantially longer products than oligonucleotide primers. Forms a primer, NSP9-pU, which is utilized by the polymerase for the initiation of RNA chains. Interacts with ribosome signal recognition particle RNA (SRP). Together with NSP8, suppress protein integration into the cell membrane, thereby disrupting host immune defenses. In terms of biological role, plays a pivotal role in viral transcription by stimulating both nsp14 3'-5' exoribonuclease and nsp16 2'-O-methyltransferase activities. Therefore plays an essential role in viral mRNAs cap methylation. Functionally, RNA-directed RNA polymerase that catalyzes the transcription of viral genomic and subgenomic RNAs. Acts in complex with nsp7 and nsp8 to transcribe both the minus and positive strands of genomic RNA. The kinase-like NiRAN domain of NSP12 attaches one or more nucleotides to the amino terminus of NSP9, forming a covalent RNA-protein intermediate that serves as transcription/replication primer. Subgenomic RNAs (sgRNAs) are formed by discontinuous transcription: The polymerase has the ability to pause at transcription-regulating sequences (TRS) and jump to the leader TRS, resulting in a major deletion. This creates a series of subgenomic RNAs that are replicated, transcribed and translated. In addition, Nsp12 is a subunit of the viral RNA capping enzyme that catalyzes the RNA guanylyltransferase reaction for genomic and sub-genomic RNAs. Subsequently, the NiRAN domain transfers RNA to GDP, and forms the core cap structure GpppA-RNA. Its function is as follows. Multi-functional protein with a zinc-binding domain in N-terminus displaying RNA and DNA duplex-unwinding activities with 5' to 3' polarity. Activity of helicase is dependent on magnesium. Plays a role in viral RNA synthesis through two distinct activities. The N7-guanine methyltransferase activity plays a role in the formation of the cap structure GpppA-RNA. The proofreading exoribonuclease reduces the sensitivity of the virus to RNA mutagens during replication. This activity acts on both ssRNA and dsRNA in a 3'-5' direction. In terms of biological role, plays a role in viral transcription/replication and prevents the simultaneous activation of host cell dsRNA sensors, such as MDA5/IFIH1, OAS, and PKR. Acts by degrading the 5'-polyuridines generated during replication of the poly(A) region of viral genomic and subgenomic RNAs. Catalyzes a two-step reaction in which a 2'3'-cyclic phosphate (2'3'-cP) is first generated by 2'-O transesterification, which is then hydrolyzed to a 3'-phosphate (3'-P). If not degraded, poly(U) RNA would hybridize with poly(A) RNA tails and activate host dsRNA sensors. Functionally, methyltransferase that mediates mRNA cap 2'-O-ribose methylation to the 5'-cap structure of viral mRNAs. N7-methyl guanosine cap is a prerequisite for binding of nsp16. Therefore plays an essential role in viral mRNAs cap methylation which is essential to evade immune system. This chain is Replicase polyprotein 1ab (rep), found in Pipistrellus abramus (Japanese pipistrelle).